A 621-amino-acid polypeptide reads, in one-letter code: MSANFKMNHKRDQQKSTNVVYQAHHVSRNKRGQVVGTRGGFRGCTVWLTGLSGAGKTTISFALEEYLVSHAIPCYSLDGDNVRHGLNKNLGFSAGDREENIRRIAEVARLFADAGLVCITSFISPFAKDRENARKIHESAGLPFFEIFVDAPLNICESRDVKGLYKRARAGEIKGFTGIDSDYEKPETPECVLKTNLSSVSDCVQQVVELLQEQNIVPHTTIKGIHELFVPENKVDQIRAEAETLPSLPITKLDLQWVQILSEGWATPLKGFMREKEYLQTLHFDTLLDGVVPRDGVINMSIPIVLPVSADDKARLEGCSKFALMYEGRRVALLQDPEFYEHRKEERCSRVWGTATAKHPHIKMVMESGDWLVGGDLQVLERIRWDDGLDQYRLTPLELKQKCKDMNADAVFAFQLRNPVHNGHALLMQDTRRRLLERGYKHPVLLLHPLGGWTKDDDVPLEWRMKQHAAVLEERVLDPKSTIVAIFPSPMLYAGPTEVQWHCRCRMIAGANFYIVGRDPAGMPHPETKKDLYEPTHGGKVLSMAPGLTSVEIIPFRVAAYNKIKKAMDFYDPARHEEFDFISGTRMRKLAREGEDPPDGFMAPKAWKVLTDYYRSLEKTN.

The segment at 1–216 (MSANFKMNHK…VVELLQEQNI (216 aa)) is adenylyl-sulfate kinase. Position 53–58 (53–58 (GAGKTT)) interacts with ATP. Adenosine 5'-phosphosulfate contacts are provided by residues 80–83 (DNVR), phenylalanine 92, 97–100 (REEN), 123–124 (IS), lysine 162, and 175–176 (GF). ATP-binding positions include serine 198, 415–418 (QLRN), 517–521 (GRDPA), and alanine 559. The sulfate adenylyltransferase stretch occupies residues 225–621 (IHELFVPENK…DYYRSLEKTN (397 aa)).

In the N-terminal section; belongs to the APS kinase family. It in the C-terminal section; belongs to the sulfate adenylyltransferase family. Expressed in liver, cartilage, skin and brain.

The enzyme catalyses sulfate + ATP + H(+) = adenosine 5'-phosphosulfate + diphosphate. The catalysed reaction is adenosine 5'-phosphosulfate + ATP = 3'-phosphoadenylyl sulfate + ADP + H(+). Its pathway is sulfur metabolism; sulfate assimilation. In terms of biological role, bifunctional enzyme with both ATP sulfurylase and APS kinase activity, which mediates two steps in the sulfate activation pathway. The first step is the transfer of a sulfate group to ATP to yield adenosine 5'-phosphosulfate (APS), and the second step is the transfer of a phosphate group from ATP to APS yielding 3'-phosphoadenylylsulfate/PAPS, the activated sulfate donor used by sulfotransferases. In mammals, PAPS is the sole source of sulfate while APS appears to only be an intermediate in the sulfate-activation pathway. May have an important role in skeletogenesis during postnatal growth. This is Bifunctional 3'-phosphoadenosine 5'-phosphosulfate synthase 2 (Papss2) from Mus musculus (Mouse).